The primary structure comprises 419 residues: Vascular endothelial growth factor C (419 aa).

Positions 1–31 (MHLLGFFSVACSLLAAALLPGPREAPAAAAA) are cleaved as a signal peptide. Positions 32–111 (FESGLDLSDA…RTEETIKFAA (80 aa)) are cleaved as a propeptide — or 102. Intrachain disulfides connect Cys-131/Cys-173, Cys-162/Cys-209, and Cys-166/Cys-211. N-linked (GlcNAc...) asparagine glycans are attached at residues Asn-175, Asn-205, and Asn-240. Residues 228–419 (SLPATLPQCQ…PSYWKRPQMS (192 aa)) constitute a propeptide that is removed on maturation. 4 tandem repeats follow at residues 280 to 295 (CGPN…QCVC), 304 to 319 (CGPH…QCVC), 328 to 343 (CGAN…QCVC), and 347 to 362 (CPRN…ACEC). The 4 X 16 AA repeats of C-X(10)-C-X-C-X(1,3)-C stretch occupies residues 280-362 (CGPNKELDEE…LNPGKCACEC (83 aa)).

The protein belongs to the PDGF/VEGF growth factor family. Homodimer; non-covalent and antiparallel. Interacts with FLT4/VEGFR3; the interaction is required for FLT4/VEGFR3 homodimarization and activation. Undergoes a complex proteolytic maturation which generates a variety of processed secreted forms with increased activity toward VEGFR-3, but only the fully processed form could activate VEGFR-2. VEGF-C first form an antiparallel homodimer linked by disulfide bonds. Before secretion, a cleavage occurs between Arg-227 and Ser-228 producing a heterotetramer. The next extracellular step of the processing removes the N-terminal propeptide. Finally the mature VEGF-C is composed mostly of two VEGF homology domains (VHDs) bound by non-covalent interactions. As to expression, expressed in the spleen. Expressed in the lymph node, thymus, appendix and bone marrow. Expressed in the heart, placenta, skeletal muscle, ovary and small intestine. Expressed in the prostate, testis and colon.

It is found in the secreted. In terms of biological role, growth factor active in angiogenesis, and endothelial cell growth, stimulating their proliferation and migration and also has effects on the permeability of blood vessels. May function in angiogenesis of the venous and lymphatic vascular systems during embryogenesis, and also in the maintenance of differentiated lymphatic endothelium in adults. Binds and activates KDR/VEGFR2 and FLT4/VEGFR3 receptors. This chain is Vascular endothelial growth factor C (VEGFC), found in Homo sapiens (Human).